Here is a 122-residue protein sequence, read N- to C-terminus: Large ribosomal subunit protein uL14 (122 aa).

It belongs to the universal ribosomal protein uL14 family. As to quaternary structure, part of the 50S ribosomal subunit. Forms a cluster with proteins L3 and L19. In the 70S ribosome, L14 and L19 interact and together make contacts with the 16S rRNA in bridges B5 and B8.

Its function is as follows. Binds to 23S rRNA. Forms part of two intersubunit bridges in the 70S ribosome. This is Large ribosomal subunit protein uL14 from Cellvibrio japonicus (strain Ueda107) (Pseudomonas fluorescens subsp. cellulosa).